A 292-amino-acid polypeptide reads, in one-letter code: uncharacterized protein (292 aa).

Active-site charge relay system residues include T43 and Y105. The active-site Proton donor is the Y131. Catalysis depends on K159, which acts as the Schiff-base intermediate with substrate.

This sequence belongs to the DapA family. In terms of assembly, homotetramer.

It is found in the cytoplasm. This is an uncharacterized protein from Thermococcus kodakarensis (strain ATCC BAA-918 / JCM 12380 / KOD1) (Pyrococcus kodakaraensis (strain KOD1)).